A 403-amino-acid polypeptide reads, in one-letter code: S-adenosylmethionine synthase (403 aa).

H17 contacts ATP. Position 19 (D19) interacts with Mg(2+). E45 is a K(+) binding site. L-methionine contacts are provided by E58 and Q104. Residues 104-114 (QSPDIAQGVDT) are flexible loop. Residues 179-181 (DGK), 250-251 (KF), D259, 265-266 (RK), A282, and K286 contribute to the ATP site. Position 259 (D259) interacts with L-methionine. K290 contributes to the L-methionine binding site.

This sequence belongs to the AdoMet synthase family. Homotetramer; dimer of dimers. The cofactor is Mg(2+). K(+) serves as cofactor.

The protein resides in the cytoplasm. It carries out the reaction L-methionine + ATP + H2O = S-adenosyl-L-methionine + phosphate + diphosphate. It participates in amino-acid biosynthesis; S-adenosyl-L-methionine biosynthesis; S-adenosyl-L-methionine from L-methionine: step 1/1. Functionally, catalyzes the formation of S-adenosylmethionine (AdoMet) from methionine and ATP. The overall synthetic reaction is composed of two sequential steps, AdoMet formation and the subsequent tripolyphosphate hydrolysis which occurs prior to release of AdoMet from the enzyme. The protein is S-adenosylmethionine synthase of Mycobacterium ulcerans (strain Agy99).